The following is a 371-amino-acid chain: Peptide chain release factor 2 (371 aa).

Gln-247 carries the post-translational modification N5-methylglutamine.

It belongs to the prokaryotic/mitochondrial release factor family. Methylated by PrmC. Methylation increases the termination efficiency of RF2.

It localises to the cytoplasm. In terms of biological role, peptide chain release factor 2 directs the termination of translation in response to the peptide chain termination codons UGA and UAA. The sequence is that of Peptide chain release factor 2 from Caulobacter vibrioides (strain ATCC 19089 / CIP 103742 / CB 15) (Caulobacter crescentus).